The following is a 104-amino-acid chain: L-rhamnose mutarotase (104 aa).

A substrate-binding site is contributed by tyrosine 18. The active-site Proton donor is histidine 22. Residues tyrosine 41 and 76–77 (WW) each bind substrate.

The protein belongs to the rhamnose mutarotase family. Homodimer.

It is found in the cytoplasm. The enzyme catalyses alpha-L-rhamnose = beta-L-rhamnose. It participates in carbohydrate metabolism; L-rhamnose metabolism. In terms of biological role, involved in the anomeric conversion of L-rhamnose. The chain is L-rhamnose mutarotase from Escherichia coli O8 (strain IAI1).